The following is a 405-amino-acid chain: Pulcherriminic acid synthase (405 aa).

The heme site is built by Lys-62, Asn-229, Arg-285, and Cys-353.

The protein belongs to the cytochrome P450 family. As to quaternary structure, homodimer. It depends on heme as a cofactor.

It catalyses the reaction cyclo(L-leucyl-L-leucyl) + 6 reduced [2Fe-2S]-[ferredoxin] + 3 O2 + 4 H(+) = pulcherriminic acid + 6 oxidized [2Fe-2S]-[ferredoxin] + 4 H2O. Its function is as follows. Involved in the biosynthesis of pulcherrimin, a red extracellular pigment. Catalyzes the oxidation of cyclo(L-Leu-L-Leu) (cLL) to yield pulcherriminic acid which forms pulcherrimin via a nonenzymic reaction with Fe(3+). Substrates with small alkyl groups (cAA, cLG, cLP) exhibit weaker binding to CYP134A1, but substrates with larger hydrophobic side chains bind in a similar regime to cLL. The protein is Pulcherriminic acid synthase (cypX) of Bacillus subtilis (strain 168).